The following is a 1118-amino-acid chain: DNA mismatch repair protein MSH1, mitochondrial (1118 aa).

768–775 (GPNGGGKS) contributes to the ATP binding site.

This sequence belongs to the DNA mismatch repair MutS family.

Its subcellular location is the mitochondrion. It localises to the plastid. It is found in the chloroplast. In terms of biological role, DNA mismatch repair protein specifically involved in maintenance of mitochondrial genome configuration by controlling specific rearranged portion. Functions by suppressing asymmetric recombination at some repeat pairs. This is DNA mismatch repair protein MSH1, mitochondrial (MSH1) from Arabidopsis thaliana (Mouse-ear cress).